Reading from the N-terminus, the 309-residue chain is Formimidoylglutamase (309 aa).

Positions 128, 153, 155, 157, 240, and 242 each coordinate Mn(2+).

Belongs to the arginase family. Requires Mn(2+) as cofactor.

The enzyme catalyses N-formimidoyl-L-glutamate + H2O = formamide + L-glutamate. The protein operates within amino-acid degradation; L-histidine degradation into L-glutamate; L-glutamate from N-formimidoyl-L-glutamate (hydrolase route): step 1/1. Functionally, catalyzes the conversion of N-formimidoyl-L-glutamate to L-glutamate and formamide. This chain is Formimidoylglutamase, found in Staphylococcus carnosus (strain TM300).